A 145-amino-acid polypeptide reads, in one-letter code: Large ribosomal subunit protein uL15 (145 aa).

Residues Met-1–Thr-52 are disordered. The segment covering Arg-19–Gln-33 has biased composition (gly residues).

It belongs to the universal ribosomal protein uL15 family. Part of the 50S ribosomal subunit.

Functionally, binds to the 23S rRNA. The sequence is that of Large ribosomal subunit protein uL15 from Borreliella burgdorferi (strain ATCC 35210 / DSM 4680 / CIP 102532 / B31) (Borrelia burgdorferi).